A 194-amino-acid polypeptide reads, in one-letter code: Large ribosomal subunit protein eL15 (194 aa).

The segment at 164-194 is disordered; that stretch reads SAGKKGRGLRNKGKGAEKVRPSVRANKGKTK. A compositionally biased stretch (basic residues) spans 167 to 176; the sequence is KKGRGLRNKG.

Belongs to the eukaryotic ribosomal protein eL15 family.

The sequence is that of Large ribosomal subunit protein eL15 from Thermococcus gammatolerans (strain DSM 15229 / JCM 11827 / EJ3).